Reading from the N-terminus, the 413-residue chain is Putative F-box/kelch-repeat protein At4g22430 (413 aa).

An F-box domain is found at 5–54; the sequence is NNTITDVLEGIVTEILVRLPLRSISRFKSVSQTWKSAIESVYFRRLFVSL. One copy of the Kelch repeat lies at 168 to 210; that stretch reads NMFLNKGEMYMPLYVYSSETGFWIHKEVVCPVRLPNFYDPISL.

This Arabidopsis thaliana (Mouse-ear cress) protein is Putative F-box/kelch-repeat protein At4g22430.